The primary structure comprises 368 residues: MSLFSTPGGFGTGGGSMFGSTATDNHNPMKDIEVTSPPDDSISCLSFSPPTLPGNFLIAGSWANDVRCWEVQDNGQTIPKAQQMHTGPVLDVCWSDDGSKVFTASCDKTAKMWDLNSNQSIQIAQHDAPIKTVHWVKAPNYSCIMTGSWDKSLKFWDTRSPNPLLTLQLPERCYCADVVYPMAVVATAERGLIVYQLENQPSEFRRIDSPLKHQHRCVAIFKDKQNKPTGFALGSIEGRVAIHYINPPNPAKDNFTFKCHRSNGTNTTAPQDIYAVNGIAFHPVHGTLATVGSDGRFSFWDKDARTKLKTSEQLDQPISACSFNHNGNIFAYSSSYDWSKGHEFYNPQKKNYIFLRNAAEELKPRNKK.

The segment at 1 to 37 (MSLFSTPGGFGTGGGSMFGSTATDNHNPMKDIEVTSP) is disordered. The segment covering 8-17 (GGFGTGGGSM) has biased composition (gly residues). WD repeat units lie at residues 37–79 (PPDD…QTIP), 84–114 (MHTGPVLDVCWSDDGSKVFTASCDKTAKMWD), 125–157 (QHDAPIKTVHWVKAPNYSCIMTGSWDKSLKFWD), 168–206 (QLPERCYCADVVYPMAVVATAERGLIVYQLENQPSEFRR), 215–255 (HRCV…KDNF), 271–301 (QDIYAVNGIAFHPVHGTLATVGSDGRFSFWD), and 310–346 (TSEQLDQPISACSFNHNGNIFAYSSSYDWSKGHEFYN).

The protein belongs to the WD repeat rae1 family.

The protein localises to the cytoplasm. The protein resides in the nucleus. It localises to the cytoskeleton. Its subcellular location is the spindle pole. Functionally, plays a role in mitotic bipolar spindle formation. Binds mRNA. May function in nucleocytoplasmic transport and in directly or indirectly attaching cytoplasmic mRNPs to the cytoskeleton. The sequence is that of mRNA export factor (rae1) from Xenopus tropicalis (Western clawed frog).